The chain runs to 551 residues: Protein GZF3 (551 aa).

The interval 17-43 (DNVFEPKSSENLNSLNQSEEEGHIGRW) is disordered. The GATA-type zinc finger occupies 131–155 (CKNCLTSTTPLWRRDEHGAMLCNAC). Disordered regions lie at residues 212-260 (GRKA…SATK), 379-400 (LAPT…QIRS), and 467-490 (SISN…AKDL). The span at 228–239 (SQLLMGTSSTAK) shows a compositional bias: polar residues. Over residues 244-254 (PKTESKERSDS) the composition is skewed to basic and acidic residues. The span at 388-400 (DSNPSEVPNQIRS) shows a compositional bias: polar residues. The span at 467 to 477 (SISNSVSSSDV) shows a compositional bias: low complexity. Positions 478–490 (SGRKFENHPAKDL) are enriched in basic and acidic residues.

It is found in the nucleus. This chain is Protein GZF3 (GZF3), found in Saccharomyces cerevisiae (strain ATCC 204508 / S288c) (Baker's yeast).